The primary structure comprises 457 residues: 11S globulin seed storage protein Ana o 2.0101 (457 aa).

A signal peptide spans 1–14; it reads LSVCFLILFHGCLA. Residues 15–29 are igE-binding; the sequence is SRQEWQQQDECQIDR. 2 cysteine pairs are disulfide-bonded: Cys25–Cys58 and Cys101–Cys278. Conformational epitope; mouse monoclonal antibody (mAb) 2B5-binding stretches follow at residues 29–37 and 31–48; these read RLDALEPDN and DALEPDNRVEYEAGTVEA. The 191-residue stretch at 30–220 folds into the Cupin type-1 1 domain; the sequence is LDALEPDNRV…AFQVDERLIK (191 aa). Binds goat polyclonal antibodies (pAbs) stretches follow at residues 32-45 and 55-86; these read ALEPDNRVEYEAGT and QFRCAGVALVRHTIQPNGLLLPQYSNAPQLIY. The tract at residues 34 to 57 is mouse monoclonal antibody (mAb) 2B5-binding; that stretch reads EPDNRVEYEAGTVEAWDPNHEQFR. A mouse monoclonal antibody (mAb) 4H9-binding region spans residues 41–55; the sequence is YEAGTVEAWDPNHEQ. The tract at residues 105 to 119 is igE-binding; the sequence is YQAPQQGRQQGQSGR. The segment at 215–239 is binds goat polyclonal antibodies (pAbs); sequence DERLIKQLKSEDNRGGIVKVKDDEL. The CD4(+) T cell-reactive epitope stretch occupies residues 233-252; sequence KVKDDELRVIRPSRSQSERG. The disordered stretch occupies residues 243–270; the sequence is RPSRSQSERGSESEEESEDEKRRWGQRD. Residues 261-270 show a composition bias toward basic and acidic residues; sequence DEKRRWGQRD. Residues 265–289 form a linear epitope; mouse monoclonal antibody (mAb) 1F5-binding region; the sequence is RWGQRDNGIEETICTMRLKENINDP. The short motif at 271-276 is the NGXEET; peptidase recognition motif element; it reads NGIEET. In terms of domain architecture, Cupin type-1 2 spans 284–433; sequence ENINDPARAD…AFQISREDAR (150 aa). CD4(+) T cell-reactive epitope regions lie at residues 289-308, 297-316, 321-340, 329-348, and 377-396; these read PARADIYTPEVGRLTTLNSL, PEVGRLTTLNSLNLPILKWL, EKGVLYKNALVLPHWNLNSH, ALVLPHWNLNSHSIIYGCKG, and QNFAVVKRAREERFEWISFK. The tract at residues 395–416 is binds goat polyclonal antibodies (pAbs), but buried in the 3D-structure model; that stretch reads FKTNDRAMTSPLAGRTSVLGGM.

Belongs to the 11S seed storage protein (globulins) family. Homotrimer. Hexamer. Each subunit is composed of an acidic and a basic chain derived from a single precursor and linked by a disulfide bond. Proteolytically processed from a single precursor to produce an acidic and a basic chain that are linked by a disulfide bond. Not glycosylated. As to expression, expressed in seed (at protein level). Expressed in the juice of the cashew apple (at protein level).

In terms of biological role, seed storage protein. The sequence is that of 11S globulin seed storage protein Ana o 2.0101 from Anacardium occidentale (Cashew).